The sequence spans 447 residues: GTPase Der (447 aa).

EngA-type G domains follow at residues 3–167 (PVIA…VQER) and 181–354 (VKIA…AAAM). Residues 9-16 (GRPNVGKS), 56-60 (DTGGF), 119-122 (NKAE), 187-194 (GRPNVGKS), 234-238 (DTAGL), and 299-302 (NKWD) contribute to the GTP site. One can recognise a KH-like domain in the interval 355–439 (VKLPTPQLTR…PLRIEFRTNK (85 aa)).

This sequence belongs to the TRAFAC class TrmE-Era-EngA-EngB-Septin-like GTPase superfamily. EngA (Der) GTPase family. As to quaternary structure, associates with the 50S ribosomal subunit.

In terms of biological role, GTPase that plays an essential role in the late steps of ribosome biogenesis. This chain is GTPase Der, found in Cupriavidus taiwanensis (strain DSM 17343 / BCRC 17206 / CCUG 44338 / CIP 107171 / LMG 19424 / R1) (Ralstonia taiwanensis (strain LMG 19424)).